A 195-amino-acid chain; its full sequence is Dephospho-CoA kinase (195 aa).

In terms of domain architecture, DPCK spans 3 to 195 (KIGLTGGIGS…ANMKNVIAEI (193 aa)). 11-16 (GSGKST) provides a ligand contact to ATP.

This sequence belongs to the CoaE family.

Its subcellular location is the cytoplasm. The catalysed reaction is 3'-dephospho-CoA + ATP = ADP + CoA + H(+). It participates in cofactor biosynthesis; coenzyme A biosynthesis; CoA from (R)-pantothenate: step 5/5. Catalyzes the phosphorylation of the 3'-hydroxyl group of dephosphocoenzyme A to form coenzyme A. The chain is Dephospho-CoA kinase from Corynebacterium glutamicum (Brevibacterium saccharolyticum).